The sequence spans 29 residues: Cytochrome b6-f complex subunit 8 (29 aa).

A helical transmembrane segment spans residues 3-23 (IVSLAWAVLMVVFTFSLSLVV).

The protein belongs to the PetN family. As to quaternary structure, the 4 large subunits of the cytochrome b6-f complex are cytochrome b6, subunit IV (17 kDa polypeptide, PetD), cytochrome f and the Rieske protein, while the 4 small subunits are PetG, PetL, PetM and PetN. The complex functions as a dimer.

Its subcellular location is the plastid. The protein localises to the chloroplast thylakoid membrane. Its function is as follows. Component of the cytochrome b6-f complex, which mediates electron transfer between photosystem II (PSII) and photosystem I (PSI), cyclic electron flow around PSI, and state transitions. The polypeptide is Cytochrome b6-f complex subunit 8 (Drimys granadensis).